The following is a 444-amino-acid chain: Probable D-serine dehydratase (444 aa).

Position 118 is an N6-(pyridoxal phosphate)lysine (Lys118).

This sequence belongs to the serine/threonine dehydratase family. DsdA subfamily. Pyridoxal 5'-phosphate is required as a cofactor.

The catalysed reaction is D-serine = pyruvate + NH4(+). In Desulfitobacterium hafniense (strain Y51), this protein is Probable D-serine dehydratase.